A 171-amino-acid polypeptide reads, in one-letter code: Skp-like protein (171 aa).

The first 21 residues, 1–21 (MKKLLFSTFLLVLGSTSAAHA), serve as a signal peptide directing secretion.

It belongs to the Skp family.

In Chlamydia pneumoniae (Chlamydophila pneumoniae), this protein is Skp-like protein.